The chain runs to 894 residues: Nitrate reductase [NADPH] (894 aa).

A disordered region spans residues 1–79 (MAVKSQLGVT…PEDLKTPDHR (79 aa)). Residues 7–16 (LGVTYTTKTF) show a composition bias toward polar residues. A compositionally biased stretch (basic and acidic residues) spans 69-79 (LPEDLKTPDHR). Cys-169 contacts Mo-molybdopterin. A Cytochrome b5 heme-binding domain is found at 535 to 610 (VRIISLEELK…MPQYHIGTLN (76 aa)). His-570 and His-593 together coordinate heme. Residues 638-749 (KYWSKAILET…KGPVGKFEYL (112 aa)) form the FAD-binding FR-type domain. FAD is bound by residues 692–695 (RAYT), 709–713 (LIKIY), 723–725 (KMT), Ser-773, and Thr-776.

The protein belongs to the nitrate reductase family. In terms of assembly, homodimer. FAD is required as a cofactor. It depends on heme as a cofactor. Requires Mo-molybdopterin as cofactor.

The enzyme catalyses nitrite + NADP(+) + H2O = nitrate + NADPH + H(+). Functionally, nitrate reductase is a key enzyme involved in the first step of nitrate assimilation in plants, fungi and bacteria. This chain is Nitrate reductase [NADPH] (NIA), found in Beauveria bassiana (White muscardine disease fungus).